The primary structure comprises 324 residues: Bis(5'-nucleosyl)-tetraphosphatase, symmetrical (324 aa).

The tract at residues P269 to E324 is disordered. Basic residues predominate over residues A282–G297. The segment covering G298–G309 has biased composition (gly residues). The segment covering N310–E324 has biased composition (low complexity).

It belongs to the Ap4A hydrolase family.

The catalysed reaction is P(1),P(4)-bis(5'-adenosyl) tetraphosphate + H2O = 2 ADP + 2 H(+). In terms of biological role, hydrolyzes diadenosine 5',5'''-P1,P4-tetraphosphate to yield ADP. This Xanthomonas campestris pv. campestris (strain ATCC 33913 / DSM 3586 / NCPPB 528 / LMG 568 / P 25) protein is Bis(5'-nucleosyl)-tetraphosphatase, symmetrical.